The following is a 373-amino-acid chain: tRNA-specific 2-thiouridylase MnmA (373 aa).

ATP contacts are provided by residues 12 to 19 (GMSGGVDS) and Met-38. The segment at 98–100 (NPD) is interaction with target base in tRNA. Cys-103 functions as the Nucleophile in the catalytic mechanism. A disulfide bridge connects residues Cys-103 and Cys-200. An ATP-binding site is contributed by Gly-127. The segment at 150–152 (KDQ) is interaction with tRNA. Cys-200 functions as the Cysteine persulfide intermediate in the catalytic mechanism. The interaction with tRNA stretch occupies residues 312–313 (RY).

It belongs to the MnmA/TRMU family.

It localises to the cytoplasm. It carries out the reaction S-sulfanyl-L-cysteinyl-[protein] + uridine(34) in tRNA + AH2 + ATP = 2-thiouridine(34) in tRNA + L-cysteinyl-[protein] + A + AMP + diphosphate + H(+). Functionally, catalyzes the 2-thiolation of uridine at the wobble position (U34) of tRNA, leading to the formation of s(2)U34. This chain is tRNA-specific 2-thiouridylase MnmA, found in Streptococcus pyogenes serotype M49 (strain NZ131).